A 608-amino-acid polypeptide reads, in one-letter code: MLLDEIKRMSYDELKRLAEDIRKKITEVVLKNGGHLASNLGTIELTLALYRVFDPREDAIIWDTGHQAYTHKILTGRDELFHTIRTFGGLSGFVTRRESPLDWFGTGHAGTSIAAGLGFEKAFELLGEKRHVVVVIGDGALTSGMALEALNQLKNINSKMKIILNDNGMSISPNVGGLAYHLSKLRTSPIYLKGKKVLKEVLEKTEIGFEVEEEMKYLRDSLKGMIQGTNFFESLGLKYFGPFDGHNIELLEKVFKRIRDYDYPSVIHVVTKKGKGFTAAEEDPTKYHSAPPSEKPKMLSYSELLGYTLSRIAREDKKIVAITAAMADGTGLSIFQKEHPDRFFDLGITEQTCVTFGAALGLHGMKPVVAIYSTFLQRAYDQIVHDVALQNAPVLFAIDKSGVVGEDGPTHHGLFDINYLLPVPNMKIISPSSPEEFVSSLYTILKNLDGPVAIRYPKESFYGEVESILENMKKIDLGWKILRRGKEAAIIATGTILNEVLKIPLDVTVVNALTVKPLDTAVLKEIARDHDIIITVEEAMRIGGFGSFVAQRLQEMGWQGKIVNVGVEDLFVPHGGRKELLSTLGLDSEGLTKTVLTYIKARSREGKV.

Residues His-66 and 107–109 contribute to the thiamine diphosphate site; that span reads GHA. Asp-138 contacts Mg(2+). Thiamine diphosphate contacts are provided by residues 139-140, Asn-167, Phe-277, and Glu-350; that span reads GA. Mg(2+) is bound at residue Asn-167.

Belongs to the transketolase family. DXPS subfamily. As to quaternary structure, homodimer. It depends on Mg(2+) as a cofactor. Thiamine diphosphate serves as cofactor.

The catalysed reaction is D-glyceraldehyde 3-phosphate + pyruvate + H(+) = 1-deoxy-D-xylulose 5-phosphate + CO2. It functions in the pathway metabolic intermediate biosynthesis; 1-deoxy-D-xylulose 5-phosphate biosynthesis; 1-deoxy-D-xylulose 5-phosphate from D-glyceraldehyde 3-phosphate and pyruvate: step 1/1. In terms of biological role, catalyzes the acyloin condensation reaction between C atoms 2 and 3 of pyruvate and glyceraldehyde 3-phosphate to yield 1-deoxy-D-xylulose-5-phosphate (DXP). The sequence is that of 1-deoxy-D-xylulose-5-phosphate synthase from Thermotoga petrophila (strain ATCC BAA-488 / DSM 13995 / JCM 10881 / RKU-1).